A 200-amino-acid chain; its full sequence is Snake venom serine protease VaSP1 (200 aa).

Positions 1–200 (VIGGDECNIN…EIQGIVSYGK (200 aa)) constitute a Peptidase S1 domain. Residues aspartate 88 and serine 182 each act as charge relay system in the active site.

As to quaternary structure, monomer. In terms of processing, N-glycosylated. The protein exist in multiple isoforms. Expressed by the venom gland.

The protein resides in the secreted. With respect to regulation, inhibited by Pefabloc (90% inhibition), DTT (90%), Zn(2+) (80%), trypsin inhibitor II (50%), and benzamidine (45%), but not inhibited by EDTA, Ca(2+), Mg(2+) and L-Cys. In terms of biological role, snake venom serine protease active on several blood coagulation enzymes. It completely cleaves fibrinogen Aalpha chain (FGA) after 120 minutes, partially cleaves Bbeta chain (FGB) (overnight) and has no activity on gamma chain. It does not release fibrinopeptides A and/or B exclusively, since the enzyme does not provoke fibrin polymerisation. It also degrades fibrin as efficiently as plasmin, and exhibits potent ability to cleave plasminogen and prothrombin, as well as heavy chain of factor X (F10). In vitro, it cleaves insulin B-chain (at positions His38-Leu39, Ala40-Leu41 and Tyr16-Leu17). The chain is Snake venom serine protease VaSP1 from Vipera ammodytes ammodytes (Western sand viper).